A 518-amino-acid chain; its full sequence is Glutamate--cysteine ligase (518 aa).

The protein belongs to the glutamate--cysteine ligase type 1 family. Type 1 subfamily.

The enzyme catalyses L-cysteine + L-glutamate + ATP = gamma-L-glutamyl-L-cysteine + ADP + phosphate + H(+). Its pathway is sulfur metabolism; glutathione biosynthesis; glutathione from L-cysteine and L-glutamate: step 1/2. The chain is Glutamate--cysteine ligase from Klebsiella pneumoniae subsp. pneumoniae (strain ATCC 700721 / MGH 78578).